We begin with the raw amino-acid sequence, 431 residues long: Protein CLT2, chloroplastic (431 aa).

The transit peptide at 1 to 79 (MDTVLMATTP…PMRRPRFSVG (79 aa)) directs the protein to the chloroplast. 10 consecutive transmembrane segments (helical) span residues 99 to 119 (VVIV…LVPM), 122 to 142 (YPFF…FTIL), 163 to 183 (FAII…AAAM), 188 to 208 (VIPI…LLIL), 212 to 232 (FLLN…VAVS), 244 to 264 (IGFL…GASI), 284 to 304 (IFVV…LLLP), 343 to 363 (ILPL…LHLV), 365 to 385 (ISSA…AVYI), and 403 to 423 (FTMG…PTTP).

It belongs to the CRT-like transporter family.

Its subcellular location is the plastid. The protein resides in the chloroplast membrane. In terms of biological role, involved in thiol transport from the plastid to the cytosol. Transports probably both glutathione (GSH) and its precursor, gamma-glutamylcysteine (gamma-EC). The chain is Protein CLT2, chloroplastic from Arabidopsis thaliana (Mouse-ear cress).